The primary structure comprises 412 residues: Tryptophan synthase beta chain (412 aa).

Lysine 92 carries the N6-(pyridoxal phosphate)lysine modification.

The protein belongs to the TrpB family. As to quaternary structure, tetramer of two alpha and two beta chains. Pyridoxal 5'-phosphate serves as cofactor.

It catalyses the reaction (1S,2R)-1-C-(indol-3-yl)glycerol 3-phosphate + L-serine = D-glyceraldehyde 3-phosphate + L-tryptophan + H2O. It participates in amino-acid biosynthesis; L-tryptophan biosynthesis; L-tryptophan from chorismate: step 5/5. Its function is as follows. The beta subunit is responsible for the synthesis of L-tryptophan from indole and L-serine. The protein is Tryptophan synthase beta chain of Methylibium petroleiphilum (strain ATCC BAA-1232 / LMG 22953 / PM1).